Reading from the N-terminus, the 503-residue chain is Ent-kaurene oxidase-like 5 (503 aa).

A helical membrane pass occupies residues 8-28 (GAGGIGVAAAAAVVAATLAVV). Cysteine 448 lines the heme pocket.

This sequence belongs to the cytochrome P450 family. Heme is required as a cofactor. In terms of tissue distribution, expressed in roots.

The protein resides in the membrane. Functionally, may hydroxylate diterpenes. This Oryza sativa subsp. japonica (Rice) protein is Ent-kaurene oxidase-like 5.